Here is a 327-residue protein sequence, read N- to C-terminus: GMP reductase (327 aa).

The Thioimidate intermediate role is filled by C176. 205–228 (IIADGGIRTHGDIAKSIRFGATMV) is a binding site for NADP(+).

The protein belongs to the IMPDH/GMPR family. GuaC type 2 subfamily.

It catalyses the reaction IMP + NH4(+) + NADP(+) = GMP + NADPH + 2 H(+). In terms of biological role, catalyzes the irreversible NADPH-dependent deamination of GMP to IMP. It functions in the conversion of nucleobase, nucleoside and nucleotide derivatives of G to A nucleotides, and in maintaining the intracellular balance of A and G nucleotides. The protein is GMP reductase of Streptococcus equi subsp. zooepidemicus (strain H70).